A 234-amino-acid chain; its full sequence is Orotidine 5'-phosphate decarboxylase (234 aa).

Substrate-binding positions include Asp10, Lys32, 59-68 (DLKFHDIPNT), Thr119, Arg180, Gln189, Gly209, and Arg210. Lys61 serves as the catalytic Proton donor.

It belongs to the OMP decarboxylase family. Type 1 subfamily. Homodimer.

The catalysed reaction is orotidine 5'-phosphate + H(+) = UMP + CO2. It participates in pyrimidine metabolism; UMP biosynthesis via de novo pathway; UMP from orotate: step 2/2. Catalyzes the decarboxylation of orotidine 5'-monophosphate (OMP) to uridine 5'-monophosphate (UMP). The sequence is that of Orotidine 5'-phosphate decarboxylase from Mannheimia succiniciproducens (strain KCTC 0769BP / MBEL55E).